The following is a 51-amino-acid chain: Ovomucoid (51 aa).

One can recognise a Kazal-like domain in the interval V1–G49. Disulfide bonds link C3/C33, C11/C30, and C19/C51. The N-linked (GlcNAc...) asparagine glycan is linked to N40.

It is found in the secreted. The polypeptide is Ovomucoid (Polyplectron napoleonis (Palawan peacock-pheasant)).